The primary structure comprises 429 residues: 46 kDa membrane protein (429 aa).

The next 9 membrane-spanning stretches (helical) occupy residues 26–46 (AALT…EDVF), 51–71 (TGID…VSVL), 99–119 (LVLV…VLLI), 173–193 (FLIH…ALLP), 224–244 (LLIK…AHPV), 279–299 (TLLF…TDVV), 315–335 (LLTV…IDNI), 360–380 (ILWW…AVGA), and 407–427 (IAVT…RYLV).

The protein belongs to the CitM (TC 2.A.11) transporter family.

It is found in the cell membrane. This is 46 kDa membrane protein (ag45) from Mycobacterium leprae (strain TN).